Reading from the N-terminus, the 68-residue chain is UPF0435 protein SAB1812c (68 aa).

Belongs to the UPF0435 family.

The sequence is that of UPF0435 protein SAB1812c from Staphylococcus aureus (strain bovine RF122 / ET3-1).